A 90-amino-acid polypeptide reads, in one-letter code: U7-theraphotoxin-Hhn1e (90 aa).

The N-terminal stretch at 1 to 19 (MKTAIFTVVLALAVFAVLS) is a signal peptide. Residues 20–50 (FGWEANEKALSEEFTELIHEKEAASETEARE) constitute a propeptide that is removed on maturation. 3 cysteine pairs are disulfide-bonded: Cys-51/Cys-65, Cys-58/Cys-70, and Cys-64/Cys-81.

Belongs to the neurotoxin 10 (Hwtx-1) family. 13 (Hntx-13) subfamily. As to expression, expressed by the venom gland.

It is found in the secreted. Its function is as follows. Ion channel inhibitor. The chain is U7-theraphotoxin-Hhn1e from Cyriopagopus hainanus (Chinese bird spider).